The primary structure comprises 448 residues: MALEKLGKALNNALRKLARSSTVDEATIKEVVRDIQRALIQADVNVRLVLDLTKRIEKRALEEEPPTGVSKKEHIIKIVYEELTKFLGTEAKPIEIKEKPTVLLTVGIQGSGKTTSIAKLARYFQKRGYKVGLVCSDTWRPGAYQQLKQLVEPFGIEVFGDPEEKDAIKLAKEGVEHFREKGVDIIIVDSAGRHKEEKSLIEEMKQISAAIKPHEVILVIDGTIGQQAYNQALAFKEATPIGSIIVTKLDGSAKGGGALSAVAATGAPIKFIGVGERIDDLEPFDPKRFVSRLLGLGDIQGLLEKFEELQKQQEFREEDLEKFLKGKFNLKDMYAQLEAMQKMGPLKQILQMIPGMGYSLPDDAVRVGEERLKKFKVIMDSMTEEELEHPEIINYSRIKRIARGSGTSIQEVRELLHQYNQMKKMFKSMDKRKLSKMARKFNLGGFGL.

GTP contacts are provided by residues 107–114 (GIQGSGKT), 189–193 (DSAGR), and 247–250 (TKLD).

It belongs to the GTP-binding SRP family. SRP54 subfamily. As to quaternary structure, part of the signal recognition particle protein translocation system, which is composed of SRP and FtsY. Archaeal SRP consists of a 7S RNA molecule of 300 nucleotides and two protein subunits: SRP54 and SRP19.

The protein resides in the cytoplasm. The catalysed reaction is GTP + H2O = GDP + phosphate + H(+). Functionally, involved in targeting and insertion of nascent membrane proteins into the cytoplasmic membrane. Binds to the hydrophobic signal sequence of the ribosome-nascent chain (RNC) as it emerges from the ribosomes. The SRP-RNC complex is then targeted to the cytoplasmic membrane where it interacts with the SRP receptor FtsY. The polypeptide is Signal recognition particle 54 kDa protein (Thermococcus onnurineus (strain NA1)).